The chain runs to 131 residues: UPF0102 protein YraN (131 aa).

The span at 1–19 (MATVPTRSGSPRQLTTKQT) shows a compositional bias: polar residues. The segment at 1-21 (MATVPTRSGSPRQLTTKQTGD) is disordered.

It belongs to the UPF0102 family.

The sequence is that of UPF0102 protein YraN from Escherichia coli O45:K1 (strain S88 / ExPEC).